Consider the following 199-residue polypeptide: Pyridoxal 5'-phosphate synthase subunit PdxT (199 aa).

49 to 51 (GES) provides a ligand contact to L-glutamine. The active-site Nucleophile is the Cys81. L-glutamine is bound by residues Arg110 and 139-140 (IR). Catalysis depends on charge relay system residues His175 and Glu177.

This sequence belongs to the glutaminase PdxT/SNO family. As to quaternary structure, in the presence of PdxS, forms a dodecamer of heterodimers. Only shows activity in the heterodimer.

The enzyme catalyses aldehydo-D-ribose 5-phosphate + D-glyceraldehyde 3-phosphate + L-glutamine = pyridoxal 5'-phosphate + L-glutamate + phosphate + 3 H2O + H(+). The catalysed reaction is L-glutamine + H2O = L-glutamate + NH4(+). It participates in cofactor biosynthesis; pyridoxal 5'-phosphate biosynthesis. Catalyzes the hydrolysis of glutamine to glutamate and ammonia as part of the biosynthesis of pyridoxal 5'-phosphate. The resulting ammonia molecule is channeled to the active site of PdxS. The sequence is that of Pyridoxal 5'-phosphate synthase subunit PdxT from Frankia alni (strain DSM 45986 / CECT 9034 / ACN14a).